Here is a 383-residue protein sequence, read N- to C-terminus: Protein delta homolog 1 (383 aa).

A signal peptide spans 1–23 (MIATGALLRVLLLLLAFGHSTYG). 6 consecutive EGF-like domains span residues 24–55 (AECD…PLCE), 59–86 (TSPG…KFCE), 88–125 (DIRA…KDCQ), 127–168 (KAGP…NFCE), 170–206 (VTNS…KTCS), and 208–245 (PVSN…PTCA). Topologically, residues 24-306 (AECDPACDPQ…PLLTEGQAIC (283 aa)) are extracellular. Disulfide bonds link cysteine 26-cysteine 37, cysteine 30-cysteine 43, cysteine 45-cysteine 54, cysteine 63-cysteine 68, cysteine 76-cysteine 85, cysteine 92-cysteine 103, cysteine 97-cysteine 113, cysteine 115-cysteine 124, cysteine 131-cysteine 144, cysteine 138-cysteine 156, cysteine 158-cysteine 167, cysteine 174-cysteine 185, cysteine 179-cysteine 194, cysteine 196-cysteine 205, cysteine 212-cysteine 223, cysteine 217-cysteine 233, and cysteine 235-cysteine 244. The chain crosses the membrane as a helical span at residues 307–327 (FTILGVLTSLVVLGTVAIVFL). Residues 328 to 383 (NKCEAWVSNLRYNHMLRKKKNLLLQYNSGEELAVNIIFPEKIDMTTFNKEAGDEDI) are Cytoplasmic-facing.

Monomer. Interacts with SH3RF2. Post-translationally, glycosylated. As to expression, pancreas and adrenal glands (at protein level).

The protein resides in the membrane. The protein localises to the cytoplasm. Functionally, may have a role in neuroendocrine differentiation. Inhibits adipocyte differentiation. This is Protein delta homolog 1 (Dlk1) from Rattus norvegicus (Rat).